The primary structure comprises 109 residues: uncharacterized protein (109 aa).

Residues 75 to 95 (MALFHTVFILWPHFCGILWTV) traverse the membrane as a helical segment.

The protein localises to the membrane. This is an uncharacterized protein from Saccharomyces cerevisiae (strain ATCC 204508 / S288c) (Baker's yeast).